The following is a 635-amino-acid chain: Sodium- and chloride-dependent transporter XTRP3B (635 aa).

Residues 1-38 (MESPSAHAVSLPEDEELQPWGGAGGPGQHPGRPRSTEC) form a disordered region. Residues 1–56 (MESPSAHAVSLPEDEELQPWGGAGGPGQHPGRPRSTECAHPGVVEKVRPKWDNPLQ) are Cytoplasmic-facing. Residues 57–77 (FLLVCISYAVGLGNVWRFPYL) traverse the membrane as a helical segment. Residues 78-85 (CQMYGGGN) lie on the Extracellular side of the membrane. A helical transmembrane segment spans residues 86–106 (FLVPYIIMLIVEGMPLLYLEL). The Cytoplasmic portion of the chain corresponds to 107–127 (AVGQRMRQGSIGAWRTISPYL). A helical transmembrane segment spans residues 128–148 (SGVGIASLVVSFLASVYFNVI). Topologically, residues 149–208 (NTWALWYLFHSFQDPLPWSVCPLNSNHTGYDEECEKASSTQYFWYRKTLNISPSIQENGG) are extracellular. A glycan (N-linked (GlcNAc...) asparagine) is linked at Asn174. The chain crosses the membrane as a helical span at residues 209–229 (VQWEPALCLTLAWLMVYLCIL). Over 230 to 237 (RGTESTGK) the chain is Cytoplasmic. A helical transmembrane segment spans residues 238 to 258 (VVYFTTSLPYFVLIIYLVRGL). The Extracellular segment spans residues 259–284 (TLHGATNGLAYMFTPKIEQLANPKAW). The helical transmembrane segment at 285-305 (INAATQIFFSLGLGCGGLIAF) threads the bilayer. Residues 306 to 319 (ASYNEPSNDCQKHA) are Cytoplasmic-facing. Residues 320 to 340 (LIVSVINSTTAIFSSIVTFSI) form a helical membrane-spanning segment. Over 341 to 432 (YGFKATFNYE…EAIKNMEVSQ (92 aa)) the chain is Extracellular. Residue Asn400 is glycosylated (N-linked (GlcNAc...) asparagine). The helical transmembrane segment at 433–453 (LWSVLYFFMLLTLGMGSMVGT) threads the bilayer. The Cytoplasmic portion of the chain corresponds to 454–474 (GTAILTPLTDSKIISSYLPKE). A helical membrane pass occupies residues 475 to 495 (AISGLVCLLNCAIGMVFTMEA). At 496 to 508 (GNYWFDLFNDYTA) the chain is on the extracellular side. Residues 509–529 (TLSLLLIVLVETIAVCYVYGL) traverse the membrane as a helical segment. Residues 530 to 547 (KRFESDLRAMTGRTLSWY) are Cytoplasmic-facing. The chain crosses the membrane as a helical span at residues 548–568 (WKVMWAFVSPLLIVGLFIFYL). Residues 569 to 597 (SDYILTGTLQYQAWDATQGHVVTKDYPTY) lie on the Extracellular side of the membrane. Residues 598 to 618 (ALAVIGLLVASSTMCIPLVAL) traverse the membrane as a helical segment. Topologically, residues 619–635 (GTFVTRHFKIREQFSAA) are cytoplasmic.

The protein belongs to the sodium:neurotransmitter symporter (SNF) (TC 2.A.22) family. SLC6A20 subfamily. Interacts with CLTRN. Detected only in kidney and lung.

It is found in the apical cell membrane. Does not show transporter activity with a range of tested amino acids including proline, glutamine, glutamic acid, leucine, alanine, histidine, glycine and arginine. In Mus musculus (Mouse), this protein is Sodium- and chloride-dependent transporter XTRP3B (Slc6a20b).